Reading from the N-terminus, the 371-residue chain is Cysteine proteinase EP-B 1 (371 aa).

The signal sequence occupies residues 1 to 28 (MGLLSKKLLVASMVAAVLAVAAVELCSA). Residues 29 to 133 (IPMEDKDLES…FMYAALNVSD (105 aa)) constitute a propeptide, activation peptide. N-linked (GlcNAc...) asparagine glycosylation occurs at N130. 3 cysteine pairs are disulfide-bonded: C155/C197, C189/C230, and C291/C343. C158 is a catalytic residue. Active-site residues include H297 and N318.

This sequence belongs to the peptidase C1 family.

The chain is Cysteine proteinase EP-B 1 from Hordeum vulgare (Barley).